The chain runs to 314 residues: MIOREX complex component 8 (314 aa).

Positions 132-312 (TLPEVIFLGG…RYVIFQSCGL (181 aa)) constitute an EngB-type G domain. Residues 140 to 147 (GGTNVGKS), 173 to 177 (GFTKT), 191 to 194 (DSPG), 253 to 256 (TKMD), and 290 to 292 (SST) contribute to the GTP site. Mg(2+) contacts are provided by Ser147 and Thr175.

The protein belongs to the TRAFAC class TrmE-Era-EngA-EngB-Septin-like GTPase superfamily. EngB GTPase family. As to quaternary structure, associates with the mitochondrial ribosome. Mg(2+) serves as cofactor. Sumoylated upon ethanol stress.

Its subcellular location is the mitochondrion. Functionally, component of MIOREX complexes, large expressome-like assemblies of ribosomes with factors involved in all the steps of post-transcriptional gene expression. The protein is MIOREX complex component 8 of Saccharomyces cerevisiae (strain ATCC 204508 / S288c) (Baker's yeast).